Here is a 254-residue protein sequence, read N- to C-terminus: 4-hydroxy-tetrahydrodipicolinate reductase (254 aa).

Residue 7–12 (GASGRI) coordinates NAD(+). R35 provides a ligand contact to NADP(+). Residues 91–93 (GTT) and 115–118 (AHNM) each bind NAD(+). H147 acts as the Proton donor/acceptor in catalysis. H148 contributes to the (S)-2,3,4,5-tetrahydrodipicolinate binding site. K151 (proton donor) is an active-site residue. 157-158 (GT) lines the (S)-2,3,4,5-tetrahydrodipicolinate pocket.

It belongs to the DapB family.

The protein resides in the cytoplasm. It carries out the reaction (S)-2,3,4,5-tetrahydrodipicolinate + NAD(+) + H2O = (2S,4S)-4-hydroxy-2,3,4,5-tetrahydrodipicolinate + NADH + H(+). The enzyme catalyses (S)-2,3,4,5-tetrahydrodipicolinate + NADP(+) + H2O = (2S,4S)-4-hydroxy-2,3,4,5-tetrahydrodipicolinate + NADPH + H(+). It functions in the pathway amino-acid biosynthesis; L-lysine biosynthesis via DAP pathway; (S)-tetrahydrodipicolinate from L-aspartate: step 4/4. Its function is as follows. Catalyzes the conversion of 4-hydroxy-tetrahydrodipicolinate (HTPA) to tetrahydrodipicolinate. This chain is 4-hydroxy-tetrahydrodipicolinate reductase, found in Helicobacter acinonychis (strain Sheeba).